The chain runs to 62 residues: UPF0291 protein CLB_2550 (62 aa).

Belongs to the UPF0291 family.

It localises to the cytoplasm. The sequence is that of UPF0291 protein CLB_2550 from Clostridium botulinum (strain ATCC 19397 / Type A).